Reading from the N-terminus, the 150-residue chain is D-aminoacyl-tRNA deacylase (150 aa).

The Gly-cisPro motif, important for rejection of L-amino acids motif lies at glycine 138–proline 139.

Belongs to the DTD family. In terms of assembly, homodimer.

It localises to the cytoplasm. It catalyses the reaction glycyl-tRNA(Ala) + H2O = tRNA(Ala) + glycine + H(+). The enzyme catalyses a D-aminoacyl-tRNA + H2O = a tRNA + a D-alpha-amino acid + H(+). Functionally, an aminoacyl-tRNA editing enzyme that deacylates mischarged D-aminoacyl-tRNAs. Also deacylates mischarged glycyl-tRNA(Ala), protecting cells against glycine mischarging by AlaRS. Acts via tRNA-based rather than protein-based catalysis; rejects L-amino acids rather than detecting D-amino acids in the active site. By recycling D-aminoacyl-tRNA to D-amino acids and free tRNA molecules, this enzyme counteracts the toxicity associated with the formation of D-aminoacyl-tRNA entities in vivo and helps enforce protein L-homochirality. This is D-aminoacyl-tRNA deacylase from Porphyromonas gingivalis (strain ATCC 33277 / DSM 20709 / CIP 103683 / JCM 12257 / NCTC 11834 / 2561).